We begin with the raw amino-acid sequence, 843 residues long: Protein P (843 aa).

The tract at residues 1–177 (MPLSYQHFRK…FCGSPYSWEQ (177 aa)) is terminal protein domain (TP). Residues 178–346 (DLQHGRLVIQ…YCLCHIVNLI (169 aa)) form a spacer region. Disordered regions lie at residues 219-258 (RKSRLGPQPTQGQLAGRPQGGSGSIRARVHPSPWGTVGVE) and 297-316 (SSGHAVELHHFPPNSSRSQS). The interval 347–690 (DDWGPCAEHG…YLNLYPVARQ (344 aa)) is polymerase/reverse transcriptase domain (RT). One can recognise a Reverse transcriptase domain in the interval 357–600 (EHRIRTPRTP…YSLNFMGYVI (244 aa)). Residues Asp429, Asp551, and Asp552 each coordinate Mg(2+).

It belongs to the hepadnaviridae P protein family.

It catalyses the reaction DNA(n) + a 2'-deoxyribonucleoside 5'-triphosphate = DNA(n+1) + diphosphate. The catalysed reaction is Endonucleolytic cleavage to 5'-phosphomonoester.. With respect to regulation, activated by host HSP70 and HSP40 in vitro to be able to bind the epsilon loop of the pgRNA. Because deletion of the RNase H region renders the protein partly chaperone-independent, the chaperones may be needed indirectly to relieve occlusion of the RNA-binding site by this domain. Inhibited by several reverse-transcriptase inhibitors: Lamivudine, Adefovir and Entecavir. Its function is as follows. Multifunctional enzyme that converts the viral RNA genome into dsDNA in viral cytoplasmic capsids. This enzyme displays a DNA polymerase activity that can copy either DNA or RNA templates, and a ribonuclease H (RNase H) activity that cleaves the RNA strand of RNA-DNA heteroduplexes in a partially processive 3'- to 5'-endonucleasic mode. Neo-synthesized pregenomic RNA (pgRNA) are encapsidated together with the P protein, and reverse-transcribed inside the nucleocapsid. Initiation of reverse-transcription occurs first by binding the epsilon loop on the pgRNA genome, and is initiated by protein priming, thereby the 5'-end of (-)DNA is covalently linked to P protein. Partial (+)DNA is synthesized from the (-)DNA template and generates the relaxed circular DNA (RC-DNA) genome. After budding and infection, the RC-DNA migrates in the nucleus, and is converted into a plasmid-like covalently closed circular DNA (cccDNA). The activity of P protein does not seem to be necessary for cccDNA generation, and is presumably released from (+)DNA by host nuclear DNA repair machinery. This chain is Protein P, found in Hepatitis B virus genotype B1 (isolate Japan/Ry30/2002) (HBV-B).